The chain runs to 142 residues: Deoxyuridine 5'-triphosphate nucleotidohydrolase (142 aa).

Substrate contacts are provided by residues 62-64, N75, and 79-81; these read RSG and TID.

It belongs to the dUTPase family. Requires Mg(2+) as cofactor.

It carries out the reaction dUTP + H2O = dUMP + diphosphate + H(+). It participates in pyrimidine metabolism; dUMP biosynthesis; dUMP from dCTP (dUTP route): step 2/2. In terms of biological role, this enzyme is involved in nucleotide metabolism: it produces dUMP, the immediate precursor of thymidine nucleotides and it decreases the intracellular concentration of dUTP so that uracil cannot be incorporated into DNA. The polypeptide is Deoxyuridine 5'-triphosphate nucleotidohydrolase (Picosynechococcus sp. (strain ATCC 27264 / PCC 7002 / PR-6) (Agmenellum quadruplicatum)).